A 138-amino-acid chain; its full sequence is Nanos homolog 2 (138 aa).

Positions 31-55 (ETQEIEEPSPGPPLGQDQGLGAPGA) are disordered. The Nanos-type zinc finger occupies 62–116 (LCNFCKHNGESRHVYSSHQLKTPDGVVVCPILRHYVCPVCGATGDQAHTLKYCPL). Zn(2+)-binding residues include C63, C66, H79, C90, C98, C101, H109, and C114. 2 short sequence motifs (C2HC) span residues 63-90 (CNFC…VVVC) and 98-114 (CPVC…LKYC).

It belongs to the nanos family. As to quaternary structure, interacts with CNOT1, CNOT3, CNOT6L, CNOT7 and CNOT9. As to expression, testis and ovary. Expression found in several spermatogenic stages: in cells on the periphery of the tubules which could correspond to spermatogonia, in spermatocytes and in round spermatids (at protein level).

The protein localises to the cytoplasm. It localises to the P-body. Its subcellular location is the perinuclear region. Functionally, plays a key role in the sexual differentiation of germ cells by promoting the male fate but suppressing the female fate. Represses the female fate pathways by suppressing meiosis, which in turn results in the promotion of the male fate. Maintains the suppression of meiosis by preventing STRA8 expression, which is required for premeiotic DNA replication, after CYP26B1 is decreased. Regulates the localization of the CCR4-NOT deadenylation complex to P-bodies and plays a role in recruiting the complex to trigger the degradation of mRNAs involved in meiosis. Required for the maintenance of the spermatogonial stem cell population. Not essential for the assembly of P-bodies but is required for the maintenance of their normal state. The sequence is that of Nanos homolog 2 (NANOS2) from Homo sapiens (Human).